We begin with the raw amino-acid sequence, 206 residues long: Probable GTP-binding protein EngB (206 aa).

Positions 24-198 (QGREVAFAGR…HARLDEWLGL (175 aa)) constitute an EngB-type G domain. Residues 32 to 39 (GRSNVGKS), 59 to 63 (GRTQL), 77 to 80 (DLPG), 144 to 147 (TKAD), and 177 to 179 (FSA) contribute to the GTP site. Ser39 and Thr61 together coordinate Mg(2+).

Belongs to the TRAFAC class TrmE-Era-EngA-EngB-Septin-like GTPase superfamily. EngB GTPase family. Mg(2+) is required as a cofactor.

In terms of biological role, necessary for normal cell division and for the maintenance of normal septation. This Alkalilimnicola ehrlichii (strain ATCC BAA-1101 / DSM 17681 / MLHE-1) protein is Probable GTP-binding protein EngB.